We begin with the raw amino-acid sequence, 259 residues long: Deoxyribose-phosphate aldolase (259 aa).

The Proton donor/acceptor role is filled by aspartate 102. Lysine 167 acts as the Schiff-base intermediate with acetaldehyde in catalysis. Lysine 201 acts as the Proton donor/acceptor in catalysis.

Belongs to the DeoC/FbaB aldolase family. DeoC type 2 subfamily.

It is found in the cytoplasm. It carries out the reaction 2-deoxy-D-ribose 5-phosphate = D-glyceraldehyde 3-phosphate + acetaldehyde. It functions in the pathway carbohydrate degradation; 2-deoxy-D-ribose 1-phosphate degradation; D-glyceraldehyde 3-phosphate and acetaldehyde from 2-deoxy-alpha-D-ribose 1-phosphate: step 2/2. Its function is as follows. Catalyzes a reversible aldol reaction between acetaldehyde and D-glyceraldehyde 3-phosphate to generate 2-deoxy-D-ribose 5-phosphate. The polypeptide is Deoxyribose-phosphate aldolase (Enterobacter sp. (strain 638)).